Here is a 118-residue protein sequence, read N- to C-terminus: Small ribosomal subunit protein eS10 (118 aa).

The interval 91 to 118 (RLKNAPAERPRPSRGGPRRGGYRGRARD) is disordered. A compositionally biased stretch (basic residues) spans 106-118 (GPRRGGYRGRARD).

This sequence belongs to the eukaryotic ribosomal protein eS10 family. As to quaternary structure, component of the small ribosomal subunit. Mature ribosomes consist of a small (40S) and a large (60S) subunit. The 40S subunit contains about 32 different proteins and 1 molecule of RNA (18S). The 60S subunit contains 45 different proteins and 3 molecules of RNA (25S, 5.8S and 5S).

Its subcellular location is the cytoplasm. Functionally, component of the ribosome, a large ribonucleoprotein complex responsible for the synthesis of proteins in the cell. The small ribosomal subunit (SSU) binds messenger RNAs (mRNAs) and translates the encoded message by selecting cognate aminoacyl-transfer RNA (tRNA) molecules. The large subunit (LSU) contains the ribosomal catalytic site termed the peptidyl transferase center (PTC), which catalyzes the formation of peptide bonds, thereby polymerizing the amino acids delivered by tRNAs into a polypeptide chain. The nascent polypeptides leave the ribosome through a tunnel in the LSU and interact with protein factors that function in enzymatic processing, targeting, and the membrane insertion of nascent chains at the exit of the ribosomal tunnel. The polypeptide is Small ribosomal subunit protein eS10 (RPS10) (Candida albicans (strain SC5314 / ATCC MYA-2876) (Yeast)).